The primary structure comprises 606 residues: MLHTAISCWQPFLGLAVVLIFMGSTIGCPARCECSAQNKSVSCHRRRLIAIPEGIPIETKILDLSKNRLKSVNPEEFISYPLLEEIDLSDNIIANVEPGAFNNLFNLRSLRLKGNRLKLVPLGVFTGLSNLTKLDISENKIVILLDYMFQDLHNLKSLEVGDNDLVYISHRAFSGLLSLEQLTLEKCNLTAVPTEALSHLRSLISLHLKHLNINNMPVYAFKRLFHLKHLEIDYWPLLDMMPANSLYGLNLTSLSVTNTNLSTVPFLAFKHLVYLTHLNLSYNPISTIEAGMFSDLIRLQELHIVGAQLRTIEPHSFQGLRFLRVLNVSQNLLETLEENVFSSPRALEVLSINNNPLACDCRLLWILQRQPTLQFGGQQPMCAGPDTIRERSFKDFHSTALSFYFTCKKPKIREKKLQHLLVDEGQTVQLECSADGDPQPVISWVTPRRRFITTKSNGRATVLGDGTLEIRFAQDQDSGMYVCIASNAAGNDTFTASLTVKGFASDRFLYANRTPMYMTDSNDTISNGTNANTFSLDLKTILVSTAMGCFTFLGVVLFCFLLLFVWSRGKGKHKNSIDLEYVPRKNNGAVVEGEVAGPRRFNMKMI.

An N-terminal signal peptide occupies residues 1–27 (MLHTAISCWQPFLGLAVVLIFMGSTIG). Residues 28–57 (CPARCECSAQNKSVSCHRRRLIAIPEGIPI) enclose the LRRNT domain. Residues 28–545 (CPARCECSAQ…LDLKTILVST (518 aa)) are Extracellular-facing. N38 carries an N-linked (GlcNAc...) asparagine glycan. 12 LRR repeats span residues 58 to 79 (ETKI…EFIS), 82 to 103 (LLEE…AFNN), 106 to 127 (NLRS…VFTG), 130 to 151 (NLTK…MFQD), 154 to 175 (NLKS…AFSG), 178 to 199 (SLEQ…ALSH), 202 to 223 (SLIS…AFKR), 226 to 247 (HLKH…NSLY), 250 to 271 (NLTS…AFKH), 274 to 295 (YLTH…MFSD), 298 to 319 (RLQE…SFQG), and 322 to 343 (FLRV…VFSS). N130 carries N-linked (GlcNAc...) asparagine glycosylation. N-linked (GlcNAc...) asparagine glycosylation is present at N188. N-linked (GlcNAc...) asparagine glycosylation occurs at N279. A glycan (N-linked (GlcNAc...) asparagine) is linked at N327. Residues 355–409 (NPLACDCRLLWILQRQPTLQFGGQQPMCAGPDTIRERSFKDFHSTALSFYFTCKK) form the LRRCT domain. The 90-residue stretch at 410-499 (PKIREKKLQH…GNDTFTASLT (90 aa)) folds into the Ig-like C2-type domain. C432 and C483 form a disulfide bridge. A helical transmembrane segment spans residues 546 to 566 (AMGCFTFLGVVLFCFLLLFVW). Topologically, residues 567–606 (SRGKGKHKNSIDLEYVPRKNNGAVVEGEVAGPRRFNMKMI) are cytoplasmic.

It is found in the membrane. This chain is Leucine-rich repeat and immunoglobulin-like domain-containing nogo receptor-interacting protein 2 (LINGO2), found in Homo sapiens (Human).